The sequence spans 429 residues: Ribosomal RNA small subunit methyltransferase B (429 aa).

Residues 254 to 260, Asp277, Asp303, and Asp322 each bind S-adenosyl-L-methionine; that span reads CAAPGGK. The active-site Nucleophile is the Cys375.

Belongs to the class I-like SAM-binding methyltransferase superfamily. RsmB/NOP family.

The protein resides in the cytoplasm. The enzyme catalyses cytidine(967) in 16S rRNA + S-adenosyl-L-methionine = 5-methylcytidine(967) in 16S rRNA + S-adenosyl-L-homocysteine + H(+). Its function is as follows. Specifically methylates the cytosine at position 967 (m5C967) of 16S rRNA. The chain is Ribosomal RNA small subunit methyltransferase B from Pectobacterium atrosepticum (strain SCRI 1043 / ATCC BAA-672) (Erwinia carotovora subsp. atroseptica).